Reading from the N-terminus, the 236-residue chain is 2-C-methyl-D-erythritol 4-phosphate cytidylyltransferase (236 aa).

It belongs to the IspD/TarI cytidylyltransferase family. IspD subfamily. Homodimer.

It carries out the reaction 2-C-methyl-D-erythritol 4-phosphate + CTP + H(+) = 4-CDP-2-C-methyl-D-erythritol + diphosphate. It participates in isoprenoid biosynthesis; isopentenyl diphosphate biosynthesis via DXP pathway; isopentenyl diphosphate from 1-deoxy-D-xylulose 5-phosphate: step 2/6. In terms of biological role, catalyzes the formation of 4-diphosphocytidyl-2-C-methyl-D-erythritol from CTP and 2-C-methyl-D-erythritol 4-phosphate (MEP). In Escherichia coli O139:H28 (strain E24377A / ETEC), this protein is 2-C-methyl-D-erythritol 4-phosphate cytidylyltransferase.